The chain runs to 514 residues: tRNA-2-methylthio-N(6)-dimethylallyladenosine synthase (514 aa).

The interval 1–21 (MNEEQRKASSVDVLAERDKKA) is disordered. An MTTase N-terminal domain is found at 68 to 186 (RTFLIKTYGC…LPEILEEAYL (119 aa)). 6 residues coordinate [4Fe-4S] cluster: Cys-77, Cys-113, Cys-147, Cys-223, Cys-227, and Cys-230. The Radical SAM core domain occupies 209-440 (REGNIKAWVN…KKVGHYSQIA (232 aa)). One can recognise a TRAM domain in the interval 442 to 505 (SKYEGQTVTV…QYSLNGSFVK (64 aa)).

The protein belongs to the methylthiotransferase family. MiaB subfamily. As to quaternary structure, monomer. The cofactor is [4Fe-4S] cluster.

Its subcellular location is the cytoplasm. The enzyme catalyses N(6)-dimethylallyladenosine(37) in tRNA + (sulfur carrier)-SH + AH2 + 2 S-adenosyl-L-methionine = 2-methylsulfanyl-N(6)-dimethylallyladenosine(37) in tRNA + (sulfur carrier)-H + 5'-deoxyadenosine + L-methionine + A + S-adenosyl-L-homocysteine + 2 H(+). Functionally, catalyzes the methylthiolation of N6-(dimethylallyl)adenosine (i(6)A), leading to the formation of 2-methylthio-N6-(dimethylallyl)adenosine (ms(2)i(6)A) at position 37 in tRNAs that read codons beginning with uridine. In Staphylococcus aureus (strain MRSA252), this protein is tRNA-2-methylthio-N(6)-dimethylallyladenosine synthase.